We begin with the raw amino-acid sequence, 174 residues long: uncharacterized protein (174 aa).

It belongs to the NAD(P)H dehydrogenase (quinone) family.

This is an uncharacterized protein from Bacillus subtilis (strain 168).